A 286-amino-acid polypeptide reads, in one-letter code: Toxin zeta (286 aa).

39 to 46 contacts ATP; sequence GQPGSGKT. The tract at residues 249-286 is disordered; the sequence is MVQNQHQETPEFKAIQQKMESLQPPTPPIPKTPKLPGI. Pro residues predominate over residues 272-286; that stretch reads PPTPPIPKTPKLPGI.

This sequence belongs to the zeta toxin family. In the presence of the epsilon antitoxin, forms an inactive PezA(2)PezT(2) heterotetramer.

The catalysed reaction is UDP-N-acetyl-alpha-D-glucosamine + ATP = UDP-N-acetyl-alpha-D-glucosamine 3'-phosphate + ADP + H(+). Toxic component of a type II toxin-antitoxin (TA) system. Phosphorylates UDP-N-acetyl-D-glucosamine (UNAG) on the 3'-hydroxyl group of the N-acetyl-D-glucosamine moiety, yielding UNAG-3P. UNAG-3P inhibits MurA, the first committed step in cell wall synthesis, which is then blocked. Phosphorylation is inhibited by cognate epsilon antitoxin. Part of a postsegregational killing (PSK) system involved in the killing of plasmid-free cells. The zeta toxin induces programmed cell death. In Enterococcus hirae, this protein is Toxin zeta.